Here is a 106-residue protein sequence, read N- to C-terminus: Ferredoxin (106 aa).

[3Fe-4S] cluster contacts are provided by Cys8 and Cys16. Cys20, Cys39, Cys42, and Cys45 together coordinate [4Fe-4S] cluster. Positions Arg30–Asp59 constitute a 4Fe-4S ferredoxin-type domain. Residue Cys49 participates in [3Fe-4S] cluster binding. A disordered region spans residues Pro81 to Asp106.

[4Fe-4S] cluster is required as a cofactor. [3Fe-4S] cluster serves as cofactor.

Ferredoxins are iron-sulfur proteins that transfer electrons in a wide variety of metabolic reactions. The polypeptide is Ferredoxin (fdxA) (Mycolicibacterium smegmatis (Mycobacterium smegmatis)).